Here is a 255-residue protein sequence, read N- to C-terminus: Sugar fermentation stimulation protein homolog (255 aa).

This sequence belongs to the SfsA family.

This is Sugar fermentation stimulation protein homolog from Synechococcus sp. (strain WH7803).